A 299-amino-acid polypeptide reads, in one-letter code: 33 kDa chaperonin (299 aa).

2 disulfides stabilise this stretch: C234–C236 and C268–C271.

Belongs to the HSP33 family. Post-translationally, under oxidizing conditions two disulfide bonds are formed involving the reactive cysteines. Under reducing conditions zinc is bound to the reactive cysteines and the protein is inactive.

It localises to the cytoplasm. Its function is as follows. Redox regulated molecular chaperone. Protects both thermally unfolding and oxidatively damaged proteins from irreversible aggregation. Plays an important role in the bacterial defense system toward oxidative stress. This chain is 33 kDa chaperonin, found in Pseudomonas putida (strain ATCC 700007 / DSM 6899 / JCM 31910 / BCRC 17059 / LMG 24140 / F1).